The primary structure comprises 648 residues: Golgin subfamily A member 8G (648 aa).

Pro residues predominate over residues 1–11; it reads MWPQARLPPHP. Disordered regions lie at residues 1–84 and 119–139; these read MWPQ…SATL and NKQV…KQKA. Residues 50 to 62 show a composition bias toward polar residues; the sequence is TNGSIHETATSGG. 3 coiled-coil regions span residues 105–160, 223–275, and 318–424; these read VSQL…LNTD, LEQS…MSQE, and EVEL…QQKQ. Positions 121–139 are enriched in basic and acidic residues; sequence QVEHQLEEEKKANNEKQKA. Disordered regions lie at residues 356–376, 434–461, 508–549, and 600–624; these read LREQ…QEER, ALPG…SIPQ, PITK…GVAA, and PVQG…QDHQ. Basic and acidic residues predominate over residues 441 to 453; sequence GGGHLDSEGEEAP. The span at 521-534 shows a compositional bias: gly residues; it reads PGGGHHQAGPGQGG.

Belongs to the GOLGA8 family.

This Homo sapiens (Human) protein is Golgin subfamily A member 8G.